Reading from the N-terminus, the 352-residue chain is Molybdenum import ATP-binding protein ModC (352 aa).

In terms of domain architecture, ABC transporter spans 1-229; the sequence is MLQLDFHQQL…SALRPWLPKD (229 aa). 31–38 contributes to the ATP binding site; it reads GVSGAGKT. Residues 289–352 enclose the Mop domain; sequence KSSIRNVLRA…AQIKSVSITA (64 aa).

This sequence belongs to the ABC transporter superfamily. Molybdate importer (TC 3.A.1.8) family. In terms of assembly, the complex is composed of two ATP-binding proteins (ModC), two transmembrane proteins (ModB) and a solute-binding protein (ModA).

The protein resides in the cell inner membrane. It catalyses the reaction molybdate(out) + ATP + H2O = molybdate(in) + ADP + phosphate + H(+). Its function is as follows. Part of the ABC transporter complex ModABC involved in molybdenum import. Responsible for energy coupling to the transport system. This is Molybdenum import ATP-binding protein ModC from Pectobacterium atrosepticum (strain SCRI 1043 / ATCC BAA-672) (Erwinia carotovora subsp. atroseptica).